A 244-amino-acid chain; its full sequence is tRNA (guanine-N(1)-)-methyltransferase (244 aa).

Residues glycine 113 and 132-137 (IGDYVL) contribute to the S-adenosyl-L-methionine site.

Belongs to the RNA methyltransferase TrmD family. As to quaternary structure, homodimer.

Its subcellular location is the cytoplasm. The enzyme catalyses guanosine(37) in tRNA + S-adenosyl-L-methionine = N(1)-methylguanosine(37) in tRNA + S-adenosyl-L-homocysteine + H(+). Specifically methylates guanosine-37 in various tRNAs. The chain is tRNA (guanine-N(1)-)-methyltransferase from Shouchella clausii (strain KSM-K16) (Alkalihalobacillus clausii).